A 312-amino-acid chain; its full sequence is DNA-directed RNA polymerase subunit alpha (312 aa).

An alpha N-terminal domain (alpha-NTD) region spans residues 1–226 (MIEFEKPIIT…EHLNLFTDLT (226 aa)). The tract at residues 243 to 312 (DEKVLDRTIE…DLGLGLKNDK (70 aa)) is alpha C-terminal domain (alpha-CTD).

The protein belongs to the RNA polymerase alpha chain family. As to quaternary structure, homodimer. The RNAP catalytic core consists of 2 alpha, 1 beta, 1 beta' and 1 omega subunit. When a sigma factor is associated with the core the holoenzyme is formed, which can initiate transcription.

The catalysed reaction is RNA(n) + a ribonucleoside 5'-triphosphate = RNA(n+1) + diphosphate. Its function is as follows. DNA-dependent RNA polymerase catalyzes the transcription of DNA into RNA using the four ribonucleoside triphosphates as substrates. This chain is DNA-directed RNA polymerase subunit alpha, found in Streptococcus pyogenes serotype M3 (strain ATCC BAA-595 / MGAS315).